Consider the following 238-residue polypeptide: Endonuclease V (238 aa).

Positions 46 and 116 each coordinate Mg(2+).

The protein belongs to the endonuclease V family. The cofactor is Mg(2+).

The protein resides in the cytoplasm. It catalyses the reaction Endonucleolytic cleavage at apurinic or apyrimidinic sites to products with a 5'-phosphate.. In terms of biological role, DNA repair enzyme involved in the repair of deaminated bases. Selectively cleaves double-stranded DNA at the second phosphodiester bond 3' to a deoxyinosine leaving behind the intact lesion on the nicked DNA. In Bacillus subtilis (strain 168), this protein is Endonuclease V.